A 132-amino-acid polypeptide reads, in one-letter code: ATP synthase epsilon chain (132 aa).

The span at 88–102 shows a compositional bias: basic and acidic residues; the sequence is IDKERAEAARQRAQE. A disordered region spans residues 88–112; sequence IDKERAEAARQRAQERLNSQSDDTD.

It belongs to the ATPase epsilon chain family. F-type ATPases have 2 components, CF(1) - the catalytic core - and CF(0) - the membrane proton channel. CF(1) has five subunits: alpha(3), beta(3), gamma(1), delta(1), epsilon(1). CF(0) has three main subunits: a, b and c. The F(1)F(0) complex interacts with SpoIIIJ and YqjG; YqgA is found in the same complex.

It is found in the cell membrane. Produces ATP from ADP in the presence of a proton gradient across the membrane. The sequence is that of ATP synthase epsilon chain (atpC) from Bacillus subtilis (strain 168).